The primary structure comprises 160 residues: Transcription elongation factor GreA (160 aa).

A coiled-coil region spans residues Ser49 to Ala75.

Belongs to the GreA/GreB family.

Necessary for efficient RNA polymerase transcription elongation past template-encoded arresting sites. The arresting sites in DNA have the property of trapping a certain fraction of elongating RNA polymerases that pass through, resulting in locked ternary complexes. Cleavage of the nascent transcript by cleavage factors such as GreA or GreB allows the resumption of elongation from the new 3'terminus. GreA releases sequences of 2 to 3 nucleotides. The protein is Transcription elongation factor GreA of Clostridium beijerinckii (strain ATCC 51743 / NCIMB 8052) (Clostridium acetobutylicum).